A 487-amino-acid chain; its full sequence is ATP-dependent 6-phosphofructokinase (487 aa).

Residues Gly-107, 173–174, 198–201, and Lys-226 contribute to the ATP site; these read RG and GDGT. Asp-199 serves as a coordination point for Mg(2+). Residues 227–229, 272–274, and Glu-325 each bind substrate; these read TID and MGR. Catalysis depends on Asp-229, which acts as the Proton acceptor. 341 to 343 is a binding site for ATP; that stretch reads SGN. 380–383 contributes to the substrate binding site; that stretch reads YMIR. The Peroxisomal targeting signal motif lies at 485-487; sequence AKL.

The protein belongs to the phosphofructokinase type A (PFKA) family. PPi-dependent PFK group II subfamily. Atypical ATP-dependent clade 'X' sub-subfamily. Homotetramer. It depends on Mg(2+) as a cofactor.

It localises to the glycosome. It catalyses the reaction beta-D-fructose 6-phosphate + ATP = beta-D-fructose 1,6-bisphosphate + ADP + H(+). It functions in the pathway carbohydrate degradation; glycolysis; D-glyceraldehyde 3-phosphate and glycerone phosphate from D-glucose: step 3/4. Its activity is regulated as follows. Allosterically activated by AMP. Its function is as follows. Catalyzes the phosphorylation of D-fructose 6-phosphate to fructose 1,6-bisphosphate by ATP, the first committing step of glycolysis. The chain is ATP-dependent 6-phosphofructokinase from Trypanosoma brucei brucei.